The primary structure comprises 2169 residues: Protein sidekick-1 (2169 aa).

An N-terminal signal peptide occupies residues 1–50 (MVGRKVDREIIARRNSRRDGMMMKLNFCFFFCRRWWAFLLLQLHMLQALA). The Extracellular portion of the chain corresponds to 51 to 1961 (QDDVAPYFKT…TEAPFYEEWW (1911 aa)). Ig-like C2-type domains follow at residues 56–138 (PYFK…SEVQ), 143–229 (GNFM…SPLI), 245–333 (PIIV…AFIS), 338–428 (PYFT…LDVT), and 432–521 (PAFI…VMLT). Residues C78 and C121 are joined by a disulfide bond. 3 N-linked (GlcNAc...) asparagine glycosylation sites follow: N93, N223, and N253. 3 cysteine pairs are disulfide-bonded: C267–C314, C360–C410, and C453–C505. Residues N502, N524, and N534 are each glycosylated (N-linked (GlcNAc...) asparagine). Residues 525–615 (RTFIVHPPEN…GNDSRMARLE (91 aa)) form the Ig-like C2-type 6 domain. C547 and C599 are joined by a disulfide. Residues N607, N631, N734, N773, N834, N967, and N977 are each glycosylated (N-linked (GlcNAc...) asparagine). 13 Fibronectin type-III domains span residues 622–718 (SPQN…LPEE), 723–819 (PPKN…TLQG), 824–922 (PPQN…TLED), 926–1020 (AVGH…VPPE), 1024–1123 (APSN…TLQA), 1128–1226 (APGS…TRES), 1231–1328 (PPEN…TKDD), 1332–1426 (PPIR…TEKR), 1431–1528 (PPQQ…TLQD), 1533–1651 (PPSS…VGEA), 1656–1752 (APQN…THQA), 1756–1851 (APSF…AGPA), and 1854–1955 (SPGS…TEAP). 2 N-linked (GlcNAc...) asparagine glycosylation sites follow: N1234 and N1285. A disordered region spans residues 1423–1443 (TEKRERPAPPQQLTTPQSDVS). Positions 1433–1443 (QQLTTPQSDVS) are enriched in polar residues. N-linked (GlcNAc...) asparagine glycosylation is found at N1606, N1700, N1719, N1771, and N1845. Residues 1962–1982 (FLLVMALSSLILILLVVFALV) form a helical membrane-spanning segment. Residues 1983-2169 (LHGQSKKYKN…TPVTGFSSFV (187 aa)) are Cytoplasmic-facing. Disordered regions lie at residues 2028 to 2050 (TFSK…HYSD) and 2145 to 2169 (GGVY…SSFV). Residues 2160–2169 (TPVTGFSSFV) are compositionally biased toward polar residues. Positions 2163–2169 (TGFSSFV) match the PDZ-binding motif.

This sequence belongs to the sidekick family. In terms of assembly, homodimer; mediates homophilic interactions to promote cell adhesion. As to expression, expressed by non-overlapping subsets of retinal neurons. SDK1, SDK2, DSCAM and DSCAML1 are expressed in non-overlapping subsets of interneurons and retinal ganglion cells (RGCs) that form synapses in distinct inner plexiform layer (IPL) sublaminae.

Its subcellular location is the cell membrane. It localises to the synapse. In terms of biological role, adhesion molecule that promotes lamina-specific synaptic connections in the retina. Expressed in specific subsets of interneurons and retinal ganglion cells (RGCs) and promotes synaptic connectivity via homophilic interactions. The sequence is that of Protein sidekick-1 from Gallus gallus (Chicken).